The chain runs to 184 residues: ESX-1 secretion-associated protein EspD (184 aa).

Residues 33-56 are disordered; it reads IGVGSAATPDTGPDLDNAHGQAET.

The protein localises to the secreted. Functionally, required for ESX-1 function. Required for the maintenance of adequate cellular levels of both EspA and EspC. Facilitates EsxA secretion. This is ESX-1 secretion-associated protein EspD from Mycobacterium tuberculosis (strain CDC 1551 / Oshkosh).